The following is a 184-amino-acid chain: Probable RNA 2'-phosphotransferase (184 aa).

Belongs to the KptA/TPT1 family.

Removes the 2'-phosphate from RNA via an intermediate in which the phosphate is ADP-ribosylated by NAD followed by a presumed transesterification to release the RNA and generate ADP-ribose 1''-2''-cyclic phosphate (APPR&gt;P). May function as an ADP-ribosylase. This is Probable RNA 2'-phosphotransferase from Shigella boydii serotype 18 (strain CDC 3083-94 / BS512).